The chain runs to 532 residues: Tyrosinase (532 aa).

The first 22 residues, 1 to 22 (MESTTVLLAASTLLLVLHASYG), serve as a signal peptide directing secretion. The Lumenal, melanosome segment spans residues 23-479 (QFPRACSTAQ…LEQARQIWQW (457 aa)). N-linked (GlcNAc...) asparagine glycosylation is found at Asn-90, Asn-115, and Asn-165. His-184, His-206, and His-215 together coordinate Cu cation. 2 N-linked (GlcNAc...) asparagine glycosylation sites follow: Asn-234 and Asn-341. Residues His-367 and His-371 each coordinate Cu cation. Asn-375 is a glycosylation site (N-linked (GlcNAc...) asparagine). Residue His-394 participates in Cu cation binding. A helical transmembrane segment spans residues 480 to 500 (LLGAAVVGGLVTAVIATIISL). Residues 501–532 (TCRRKRRTKTSEETRPLLMEAEDYHATYQSNL) lie on the Cytoplasmic side of the membrane.

The protein belongs to the tyrosinase family. As to quaternary structure, active tyrosinase has been found as a homodimer and homotetramer. Cu(2+) serves as cofactor. In terms of tissue distribution, frog skin.

The protein resides in the melanosome membrane. The catalysed reaction is 2 L-dopa + O2 = 2 L-dopaquinone + 2 H2O. It catalyses the reaction L-tyrosine + O2 = L-dopaquinone + H2O. Its activity is regulated as follows. Activated by trypsin, chymotrypsin and subtilisin. Activated by alpha-chymotrypsin, thermolysin and Pronase. Inhibited by its product L-DOPA and tyrosine. Its function is as follows. This is a copper-containing oxidase that functions in the formation of pigments such as melanins and other polyphenolic compounds. Catalyzes the initial and rate limiting step in the cascade of reactions leading to melanin production from tyrosine. In addition to hydroxylating tyrosine to DOPA (3,4-dihydroxyphenylalanine), also catalyzes the oxidation of DOPA to DOPA-quinone. This Pelophylax lessonae (Pool frog) protein is Tyrosinase.